Here is a 315-residue protein sequence, read N- to C-terminus: MITTSPQHVSVLLEESIEALATDPQGTYIDATFGRGGHTRALLNQLGDDARVIALDQDPEAIAAAAAFADDPRFQIIHTPFSNLQQVLDDLQLNRQVTGILFDLGVSSPQLDDAERGFSFMRDGPLDMRMNTTSGETAAEWLNRAEKDDISWVLKEYGEERFARRIASAIVMDREKKPFTRTKQLAEMIARVSPVKEKHKHPATRTFQAIRIHINRELEQIEQALEASLSGLKEDGRLVVISFHSLEDRLVKRFIRKHSEGKQLPPGLPVTEAERNKDKALEKVGKAIKPGKAEVQLNPRSRSSVLRIARRVRND.

S-adenosyl-L-methionine contacts are provided by residues 36–38 (GGH), D56, F81, D103, and Q110.

Belongs to the methyltransferase superfamily. RsmH family.

It is found in the cytoplasm. The catalysed reaction is cytidine(1402) in 16S rRNA + S-adenosyl-L-methionine = N(4)-methylcytidine(1402) in 16S rRNA + S-adenosyl-L-homocysteine + H(+). Functionally, specifically methylates the N4 position of cytidine in position 1402 (C1402) of 16S rRNA. In Idiomarina loihiensis (strain ATCC BAA-735 / DSM 15497 / L2-TR), this protein is Ribosomal RNA small subunit methyltransferase H.